Consider the following 159-residue polypeptide: Ribosomal RNA large subunit methyltransferase H (159 aa).

S-adenosyl-L-methionine contacts are provided by residues Leu76, Gly108, and 127–132 (FSKMTF).

This sequence belongs to the RNA methyltransferase RlmH family. As to quaternary structure, homodimer.

It localises to the cytoplasm. It carries out the reaction pseudouridine(1915) in 23S rRNA + S-adenosyl-L-methionine = N(3)-methylpseudouridine(1915) in 23S rRNA + S-adenosyl-L-homocysteine + H(+). Functionally, specifically methylates the pseudouridine at position 1915 (m3Psi1915) in 23S rRNA. In Geobacillus sp. (strain WCH70), this protein is Ribosomal RNA large subunit methyltransferase H.